Consider the following 89-residue polypeptide: Small ribosomal subunit protein bS18 (89 aa).

Belongs to the bacterial ribosomal protein bS18 family. As to quaternary structure, part of the 30S ribosomal subunit. Forms a tight heterodimer with protein bS6.

Its function is as follows. Binds as a heterodimer with protein bS6 to the central domain of the 16S rRNA, where it helps stabilize the platform of the 30S subunit. The protein is Small ribosomal subunit protein bS18 of Parabacteroides distasonis (strain ATCC 8503 / DSM 20701 / CIP 104284 / JCM 5825 / NCTC 11152).